A 213-amino-acid polypeptide reads, in one-letter code: MRIVLLTGFEPFDQDPVNPSWEAVRQLEGVQLADDVQIIARRLPCAFATAGARLAQLIDELHPEMVIATGLGPGRSDISIERVAINVNDARIPDNLGEQPIDTAVAPDGPAAYFTTLPIKAMVRAVRGAGIAASVSQTAGTFVCNQVFYLLQHALAATAVRSGFIHVPYLPEQVTGSQRPSMALETMVAGLHAAVLAAWQTPVDAKEAGGQVS.

Residues E81, C144, and H166 contribute to the active site.

This sequence belongs to the peptidase C15 family. Homotetramer.

It localises to the cytoplasm. The enzyme catalyses Release of an N-terminal pyroglutamyl group from a polypeptide, the second amino acid generally not being Pro.. Its function is as follows. Removes 5-oxoproline from various penultimate amino acid residues except L-proline. The protein is Pyrrolidone-carboxylate peptidase of Pseudomonas fluorescens (strain SBW25).